The sequence spans 139 residues: D-ribose pyranase (139 aa).

Residue His-20 is the Proton donor of the active site. Substrate contacts are provided by residues Asp-28, His-106, and Tyr-128 to Asn-130.

It belongs to the RbsD / FucU family. RbsD subfamily. Homodecamer.

The protein resides in the cytoplasm. It catalyses the reaction beta-D-ribopyranose = beta-D-ribofuranose. It functions in the pathway carbohydrate metabolism; D-ribose degradation; D-ribose 5-phosphate from beta-D-ribopyranose: step 1/2. Functionally, catalyzes the interconversion of beta-pyran and beta-furan forms of D-ribose. The chain is D-ribose pyranase from Pasteurella multocida (strain Pm70).